A 348-amino-acid polypeptide reads, in one-letter code: Dihydroorotase (348 aa).

Residues H17 and H19 each coordinate Zn(2+). Residues 19 to 21 (HLR) and N45 each bind substrate. 3 residues coordinate Zn(2+): K103, H140, and H178. K103 is subject to N6-carboxylysine. H140 provides a ligand contact to substrate. A substrate-binding site is contributed by L223. D251 provides a ligand contact to Zn(2+). The active site involves D251. Substrate is bound by residues H255 and A267.

This sequence belongs to the metallo-dependent hydrolases superfamily. DHOase family. Class II DHOase subfamily. As to quaternary structure, homodimer. Zn(2+) is required as a cofactor.

The enzyme catalyses (S)-dihydroorotate + H2O = N-carbamoyl-L-aspartate + H(+). The protein operates within pyrimidine metabolism; UMP biosynthesis via de novo pathway; (S)-dihydroorotate from bicarbonate: step 3/3. Catalyzes the reversible cyclization of carbamoyl aspartate to dihydroorotate. This chain is Dihydroorotase, found in Shigella boydii serotype 18 (strain CDC 3083-94 / BS512).